The chain runs to 205 residues: Large ribosomal subunit protein uL4 (205 aa).

The segment covering 43-60 (ARSGNRAQQTRAEVSAST) has biased composition (polar residues). Residues 43–96 (ARSGNRAQQTRAEVSASTHKPWRQKGTGRARSGRASSPIWRGGGVTFPNKPNEN) are disordered. Residues 62 to 74 (KPWRQKGTGRARS) show a composition bias toward basic residues.

This sequence belongs to the universal ribosomal protein uL4 family. As to quaternary structure, part of the 50S ribosomal subunit.

In terms of biological role, one of the primary rRNA binding proteins, this protein initially binds near the 5'-end of the 23S rRNA. It is important during the early stages of 50S assembly. It makes multiple contacts with different domains of the 23S rRNA in the assembled 50S subunit and ribosome. Functionally, forms part of the polypeptide exit tunnel. The chain is Large ribosomal subunit protein uL4 from Thiobacillus denitrificans (strain ATCC 25259 / T1).